A 303-amino-acid polypeptide reads, in one-letter code: Trans-enoyl reductase tazE (303 aa).

Positions 1 to 26 are disordered; it reads MTAEHDAAILPKPGGPLAVGKRATPE. Position 44-49 (44-49) interacts with NADP(+); the sequence is CDYYQR. 136–143 contributes to the substrate binding site; it reads LAVLTALT. NADP(+)-binding positions include 170-173, 193-196, Tyr-211, and 246-247; these read SSSV, SPKH, and LD. Residue 265–269 coordinates substrate; sequence VLPEC.

It belongs to the zinc-containing alcohol dehydrogenase family.

It participates in secondary metabolite biosynthesis. Trans-enoyl reductase; part of the gene cluster that mediates the biosynthesis of azaterrilone A and other azaphilones, a class of fungal metabolites characterized by a highly oxygenated pyrano-quinone bicyclic core and exhibiting a broad range of bioactivities. The first step of the pathway begins with the non-reducing polyketide synthase tazA that assembles one acetyl-CoA starter unit, five malonyl-CoA units, and catalyzes a series of Claisen condensations, methylation, PT-mediated cyclization, and finally releases the first hexaketide precursor through the R-domain. The tazA product then undergoes reduction on its terminal ketone and the following pyran-ring formation by yet undetermined enzyme(s). Dehydration and enoyl reduction, possibly involving the trans-enoyl reductase tazE leads to the next intermediate. TazD is predicted as an acetyltransferase and might catalyze the acetylation steps leading to the synthesis of azaterrilone A. Azaterrilone A is not the final product of the taz pathway and both the highly reducing polyketide synthase tazB and the dual enzyme tazHJ catalyze late steps of the pathway, leading to the production of the 2 final stereoisomers that contain additional polyketide modification whose structures have still to be determined. The protein is Trans-enoyl reductase tazE of Aspergillus terreus (strain NIH 2624 / FGSC A1156).